The sequence spans 319 residues: Cell division protein FtsQ (319 aa).

Residues methionine 1 to asparagine 53 form a disordered region. The Cytoplasmic segment spans residues methionine 1–arginine 70. The span at serine 27 to glycine 52 shows a compositional bias: basic and acidic residues. Residues tryptophan 71 to alanine 87 traverse the membrane as a helical segment. The Periplasmic portion of the chain corresponds to tyrosine 88–proline 319. In terms of domain architecture, POTRA spans arginine 97–glutamine 166.

The protein belongs to the FtsQ/DivIB family. FtsQ subfamily. As to quaternary structure, part of a complex composed of FtsB, FtsL and FtsQ.

It localises to the cell inner membrane. Functionally, essential cell division protein. May link together the upstream cell division proteins, which are predominantly cytoplasmic, with the downstream cell division proteins, which are predominantly periplasmic. May control correct divisome assembly. This Cellvibrio japonicus (strain Ueda107) (Pseudomonas fluorescens subsp. cellulosa) protein is Cell division protein FtsQ.